A 212-amino-acid chain; its full sequence is Methylthioribulose-1-phosphate dehydratase (212 aa).

Residues H97 and H99 each coordinate Zn(2+).

This sequence belongs to the aldolase class II family. MtnB subfamily. In terms of assembly, homotetramer. It depends on Zn(2+) as a cofactor.

It carries out the reaction 5-(methylsulfanyl)-D-ribulose 1-phosphate = 5-methylsulfanyl-2,3-dioxopentyl phosphate + H2O. The protein operates within amino-acid biosynthesis; L-methionine biosynthesis via salvage pathway; L-methionine from S-methyl-5-thio-alpha-D-ribose 1-phosphate: step 2/6. Its function is as follows. Catalyzes the dehydration of methylthioribulose-1-phosphate (MTRu-1-P) into 2,3-diketo-5-methylthiopentyl-1-phosphate (DK-MTP-1-P). This is Methylthioribulose-1-phosphate dehydratase from Bacillus mycoides (strain KBAB4) (Bacillus weihenstephanensis).